Consider the following 201-residue polypeptide: Small ribosomal subunit protein uS4c (201 aa).

The interval 15-44 (LGALPGLTNKRPRAGSDLRNQSRSGKKSQY) is disordered. The S4 RNA-binding domain maps to 89–150 (MRLDNILFRL…EQKSKVLIQN (62 aa)).

It belongs to the universal ribosomal protein uS4 family. As to quaternary structure, part of the 30S ribosomal subunit. Contacts protein S5. The interaction surface between S4 and S5 is involved in control of translational fidelity.

It is found in the plastid. The protein resides in the chloroplast. Its function is as follows. One of the primary rRNA binding proteins, it binds directly to 16S rRNA where it nucleates assembly of the body of the 30S subunit. With S5 and S12 plays an important role in translational accuracy. The chain is Small ribosomal subunit protein uS4c (rps4) from Lactuca sativa (Garden lettuce).